The chain runs to 1937 residues: Myosin-8 (1937 aa).

The 50-residue stretch at 35-84 (DAKTSVFVAEPKESYVKSVIQSKDGGKVTVKTESGATLTVKEDQVFPMNP) folds into the Myosin N-terminal SH3-like domain. Residues T66 and T71 each carry the phosphothreonine modification. One can recognise a Myosin motor domain in the interval 88-781 (DKIEDMAMMT…LLGLLEEMRD (694 aa)). K132 is modified (N6,N6,N6-trimethyllysine). 181–188 (GESGAGKT) contributes to the ATP binding site. A Phosphotyrosine modification is found at Y389. At T419 the chain carries Phosphothreonine. Y424 carries the post-translational modification Phosphotyrosine. At S625 the chain carries Phosphoserine. An actin-binding region spans residues 658 to 680 (LNKLMTNLRSTHPHFVRCIIPNE). Residue H756 is modified to Pros-methylhistidine. The segment at 760–774 (KFGHTKVFFKAGLLG) is actin-binding. The region spanning 781–813 (DEKLAQIITRTQAVCRGYLMRVEYQKMLLRRES) is the IQ domain. The stretch at 842–1937 (LLKSAETEKE…REVHTKISAE (1096 aa)) forms a coiled coil. Phosphoserine occurs at positions 1091 and 1095. The tract at residues 1125-1171 (IEAERASRAKAEKQRSDLSRELEEISERLEEAGGATSAQVEMNKKRE) is disordered. The segment covering 1127 to 1155 (AERASRAKAEKQRSDLSRELEEISERLEE) has biased composition (basic and acidic residues). Residues S1161 and S1236 each carry the phosphoserine modification. T1254 carries the post-translational modification Phosphothreonine. S1260 carries the post-translational modification Phosphoserine. At T1285 the chain carries Phosphothreonine. 3 positions are modified to phosphoserine: S1291, S1302, and S1305. Y1463 is subject to Phosphotyrosine. Residue T1466 is modified to Phosphothreonine. Y1491 carries the post-translational modification Phosphotyrosine. S1494 carries the phosphoserine modification. T1500 bears the Phosphothreonine mark. At S1513 the chain carries Phosphoserine. T1516 is modified (phosphothreonine). 5 positions are modified to phosphoserine: S1553, S1573, S1602, S1713, and S1725. Residue T1729 is modified to Phosphothreonine. A Phosphoserine modification is found at S1738.

This sequence belongs to the TRAFAC class myosin-kinesin ATPase superfamily. Myosin family. In terms of assembly, muscle myosin is a hexameric protein that consists of 2 heavy chain subunits (MHC), 2 alkali light chain subunits (MLC) and 2 regulatory light chain subunits (MLC-2).

It localises to the cytoplasm. It is found in the myofibril. Muscle contraction. The chain is Myosin-8 (Myh8) from Mus musculus (Mouse).